The following is a 292-amino-acid chain: MEMO1 family protein PF1638 (292 aa).

It belongs to the MEMO1 family.

This chain is MEMO1 family protein PF1638, found in Pyrococcus furiosus (strain ATCC 43587 / DSM 3638 / JCM 8422 / Vc1).